A 527-amino-acid polypeptide reads, in one-letter code: V(D)J recombination-activating protein 2 (527 aa).

Positions 357–380 (EEQTTFTNSQTSTEDPGDSTPFED) are disordered. A compositionally biased stretch (polar residues) spans 358 to 370 (EQTTFTNSQTSTE). Residues 371-380 (DPGDSTPFED) show a composition bias toward acidic residues. Residues 416–484 (WITCCPTCDV…KYYCNEHVEI (69 aa)) form a PHD-type; atypical zinc finger. Cysteine 419, cysteine 423, cysteine 446, histidine 452, histidine 455, cysteine 458, cysteine 478, and histidine 481 together coordinate Zn(2+).

It belongs to the RAG2 family. In terms of assembly, component of the RAG complex composed of core components RAG1 and RAG2, and associated component HMGB1 or HMGB2. As to expression, cells of the B- and T-lymphocyte lineages.

The protein localises to the nucleus. Core component of the RAG complex, a multiprotein complex that mediates the DNA cleavage phase during V(D)J recombination. V(D)J recombination assembles a diverse repertoire of immunoglobulin and T-cell receptor genes in developing B and T-lymphocytes through rearrangement of different V (variable), in some cases D (diversity), and J (joining) gene segments. DNA cleavage by the RAG complex occurs in 2 steps: a first nick is introduced in the top strand immediately upstream of the heptamer, generating a 3'-hydroxyl group that can attack the phosphodiester bond on the opposite strand in a direct transesterification reaction, thereby creating 4 DNA ends: 2 hairpin coding ends and 2 blunt, 5'-phosphorylated ends. The chromatin structure plays an essential role in the V(D)J recombination reactions and the presence of histone H3 trimethylated at 'Lys-4' (H3K4me3) stimulates both the nicking and haipinning steps. The RAG complex also plays a role in pre-B cell allelic exclusion, a process leading to expression of a single immunoglobulin heavy chain allele to enforce clonality and monospecific recognition by the B-cell antigen receptor (BCR) expressed on individual B-lymphocytes. The introduction of DNA breaks by the RAG complex on one immunoglobulin allele induces ATM-dependent repositioning of the other allele to pericentromeric heterochromatin, preventing accessibility to the RAG complex and recombination of the second allele. In the RAG complex, RAG2 is not the catalytic component but is required for all known catalytic activities mediated by RAG1. It probably acts as a sensor of chromatin state that recruits the RAG complex to H3K4me3. This is V(D)J recombination-activating protein 2 (RAG2) from Homo sapiens (Human).